The following is a 160-amino-acid chain: Photosystem II extrinsic protein V (160 aa).

The signal sequence occupies residues 1–25 (MKRFFLVAIASVLFFFNTMVGSANA). Heme c contacts are provided by C62, C65, H66, and H117.

It belongs to the cytochrome c family. PsbV subfamily. In terms of assembly, PSII is composed of 1 copy each of membrane proteins PsbA, PsbB, PsbC, PsbD, PsbE, PsbF, PsbH, PsbI, PsbJ, PsbK, PsbL, PsbM, PsbT, PsbX, PsbY, PsbZ, Psb30/Ycf12, peripheral proteins PsbO, CyanoQ (PsbQ), PsbU, PsbV and a large number of cofactors. It forms dimeric complexes. The cyanobacterial oxygen-evolving complex is composed of PsbO, CyanoQ (PsbQ), PsbV and PsbU. Heme c serves as cofactor.

The protein localises to the cellular thylakoid membrane. One of the extrinsic, lumenal subunits of photosystem II (PSII). PSII is a light-driven water plastoquinone oxidoreductase, using light energy to abstract electrons from H(2)O, generating a proton gradient subsequently used for ATP formation. The extrinsic proteins stabilize the structure of photosystem II oxygen-evolving complex (OEC), the ion environment of oxygen evolution and protect the OEC against heat-induced inactivation. Low-potential cytochrome c that plays a role in the OEC of PSII, required for normal function or stabilization of PSII. The protein is Photosystem II extrinsic protein V of Synechocystis sp. (strain ATCC 27184 / PCC 6803 / Kazusa).